The primary structure comprises 148 residues: MFSLQDVITTTKTTLAAMPKGYLPKWLLFISIVSVFNSIQTYVSGLELTRKVYERKPTETTHLSARTFGTWTFISCVIRFYGAMYLNEPHIFELVFMSYMVALFHFGSELLIFRTCKLGKGFMGPLVVSTTSLVWMYKQREYYTGVAW.

Topologically, residues 1 to 25 (MFSLQDVITTTKTTLAAMPKGYLPK) are cytoplasmic. A helical transmembrane segment spans residues 26-46 (WLLFISIVSVFNSIQTYVSGL). At 47-92 (ELTRKVYERKPTETTHLSARTFGTWTFISCVIRFYGAMYLNEPHIF) the chain is on the lumenal side. A helical transmembrane segment spans residues 93 to 113 (ELVFMSYMVALFHFGSELLIF). At 114 to 120 (RTCKLGK) the chain is on the cytoplasmic side. Residues 121–136 (GFMGPLVVSTTSLVWM) traverse the membrane as a helical segment. The Lumenal portion of the chain corresponds to 137–148 (YKQREYYTGVAW).

Belongs to the ERG28 family. In terms of assembly, heterotetramer of ERG25, ERG26, ERG27 and ERG28. ERG28 acts as a scaffold to tether ERG27 and other 4,4-demethylation-related enzymes, forming a demethylation enzyme complex, in the endoplasmic reticulum. Interacts with ERG25, ERG26 and ERG27. Also interacts with ERG1, ERG3, ERG5, ERG6 and ERG11.

Its subcellular location is the endoplasmic reticulum membrane. Its function is as follows. Part of the third module of ergosterol biosynthesis pathway that includes the late steps of the pathway. ERG28 has a role as a scaffold to help anchor the catalytic components of the C-4 demethylation complex ERG25, ERG26 and ERG27 to the endoplasmic reticulum. The third module or late pathway involves the ergosterol synthesis itself through consecutive reactions that mainly occur in the endoplasmic reticulum (ER) membrane. Firstly, the squalene synthase ERG9 catalyzes the condensation of 2 farnesyl pyrophosphate moieties to form squalene, which is the precursor of all steroids. Squalene synthase is crucial for balancing the incorporation of farnesyl diphosphate (FPP) into sterol and nonsterol isoprene synthesis. Secondly, the squalene epoxidase ERG1 catalyzes the stereospecific oxidation of squalene to (S)-2,3-epoxysqualene, which is considered to be a rate-limiting enzyme in steroid biosynthesis. Then, the lanosterol synthase ERG7 catalyzes the cyclization of (S)-2,3 oxidosqualene to lanosterol, a reaction that forms the sterol core. In the next steps, lanosterol is transformed to zymosterol through a complex process involving various demethylation, reduction and desaturation reactions. The lanosterol 14-alpha-demethylase ERG11 (also known as CYP51) catalyzes C14-demethylation of lanosterol to produce 4,4'-dimethyl cholesta-8,14,24-triene-3-beta-ol, which is critical for ergosterol biosynthesis. The C-14 reductase ERG24 reduces the C14=C15 double bond of 4,4-dimethyl-cholesta-8,14,24-trienol to produce 4,4-dimethyl-cholesta-8,24-dienol. 4,4-dimethyl-cholesta-8,24-dienol is substrate of the C-4 demethylation complex ERG25-ERG26-ERG27 in which ERG25 catalyzes the three-step monooxygenation required for the demethylation of 4,4-dimethyl and 4alpha-methylsterols, ERG26 catalyzes the oxidative decarboxylation that results in a reduction of the 3-beta-hydroxy group at the C-3 carbon to an oxo group, and ERG27 is responsible for the reduction of the keto group on the C-3. ERG28 has a role as a scaffold to help anchor ERG25, ERG26 and ERG27 to the endoplasmic reticulum and ERG29 regulates the activity of the iron-containing C4-methylsterol oxidase ERG25. Then, the sterol 24-C-methyltransferase ERG6 catalyzes the methyl transfer from S-adenosyl-methionine to the C-24 of zymosterol to form fecosterol. The C-8 sterol isomerase ERG2 catalyzes the reaction which results in unsaturation at C-7 in the B ring of sterols and thus converts fecosterol to episterol. The sterol-C5-desaturase ERG3 then catalyzes the introduction of a C-5 double bond in the B ring to produce 5-dehydroepisterol. The C-22 sterol desaturase ERG5 further converts 5-dehydroepisterol into ergosta-5,7,22,24(28)-tetraen-3beta-ol by forming the C-22(23) double bond in the sterol side chain. Finally, ergosta-5,7,22,24(28)-tetraen-3beta-ol is substrate of the C-24(28) sterol reductase ERG4 to produce ergosterol. This Saccharomyces cerevisiae (strain ATCC 204508 / S288c) (Baker's yeast) protein is Ergosterol biosynthetic protein 28.